We begin with the raw amino-acid sequence, 435 residues long: Serine--tRNA ligase (435 aa).

Residue 242–244 (TAE) participates in L-serine binding. Residue 273–275 (RSE) coordinates ATP. Glu296 contributes to the L-serine binding site. 360 to 363 (EISS) is an ATP binding site. Ser396 is a binding site for L-serine.

This sequence belongs to the class-II aminoacyl-tRNA synthetase family. Type-1 seryl-tRNA synthetase subfamily. Homodimer. The tRNA molecule binds across the dimer.

Its subcellular location is the cytoplasm. It catalyses the reaction tRNA(Ser) + L-serine + ATP = L-seryl-tRNA(Ser) + AMP + diphosphate + H(+). It carries out the reaction tRNA(Sec) + L-serine + ATP = L-seryl-tRNA(Sec) + AMP + diphosphate + H(+). Its pathway is aminoacyl-tRNA biosynthesis; selenocysteinyl-tRNA(Sec) biosynthesis; L-seryl-tRNA(Sec) from L-serine and tRNA(Sec): step 1/1. Its function is as follows. Catalyzes the attachment of serine to tRNA(Ser). Is also able to aminoacylate tRNA(Sec) with serine, to form the misacylated tRNA L-seryl-tRNA(Sec), which will be further converted into selenocysteinyl-tRNA(Sec). The sequence is that of Serine--tRNA ligase from Vibrio cholerae serotype O1 (strain ATCC 39541 / Classical Ogawa 395 / O395).